Consider the following 232-residue polypeptide: Cytidylate kinase (232 aa).

G15 to T23 is a binding site for ATP. The disordered stretch occupies residues K164–A192. Over residues E178–R189 the composition is skewed to basic and acidic residues.

The protein belongs to the cytidylate kinase family. Type 1 subfamily.

The protein resides in the cytoplasm. It carries out the reaction CMP + ATP = CDP + ADP. It catalyses the reaction dCMP + ATP = dCDP + ADP. This Solibacter usitatus (strain Ellin6076) protein is Cytidylate kinase.